We begin with the raw amino-acid sequence, 92 residues long: UPF0335 protein BMEI0289 (92 aa).

This sequence belongs to the UPF0335 family.

This chain is UPF0335 protein BMEI0289, found in Brucella melitensis biotype 1 (strain ATCC 23456 / CCUG 17765 / NCTC 10094 / 16M).